A 425-amino-acid polypeptide reads, in one-letter code: Serine--tRNA ligase (425 aa).

L-serine is bound at residue 233 to 235 (TAE). 264 to 266 (RRE) contributes to the ATP binding site. Position 287 (Glu287) interacts with L-serine. Residue 351–354 (EVSS) participates in ATP binding. An L-serine-binding site is contributed by Ser386.

Belongs to the class-II aminoacyl-tRNA synthetase family. Type-1 seryl-tRNA synthetase subfamily. As to quaternary structure, homodimer. The tRNA molecule binds across the dimer.

It localises to the cytoplasm. It carries out the reaction tRNA(Ser) + L-serine + ATP = L-seryl-tRNA(Ser) + AMP + diphosphate + H(+). The catalysed reaction is tRNA(Sec) + L-serine + ATP = L-seryl-tRNA(Sec) + AMP + diphosphate + H(+). The protein operates within aminoacyl-tRNA biosynthesis; selenocysteinyl-tRNA(Sec) biosynthesis; L-seryl-tRNA(Sec) from L-serine and tRNA(Sec): step 1/1. Functionally, catalyzes the attachment of serine to tRNA(Ser). Is also able to aminoacylate tRNA(Sec) with serine, to form the misacylated tRNA L-seryl-tRNA(Sec), which will be further converted into selenocysteinyl-tRNA(Sec). In Thermosipho melanesiensis (strain DSM 12029 / CIP 104789 / BI429), this protein is Serine--tRNA ligase.